A 451-amino-acid chain; its full sequence is POU domain, class 3, transcription factor 1 (451 aa).

5 disordered regions span residues 1-21 (MATT…GTGP), 69-114 (AHPQ…GFHA), 127-154 (AWAQ…HQPQ), 186-253 (GLHH…PSSD), and 395-451 (KRMT…GSVQ). Composition is skewed to gly residues over residues 11–20 (GPGGGAGGTG), 76–85 (TGGGGGGDWA), and 95–112 (AGGG…GGGF). Basic and acidic residues predominate over residues 190 to 199 (ALHEDGHEAQ). Positions 220-232 (AGGLHAAAAHLHP) are enriched in low complexity. The 75-residue stretch at 247–321 (EDAPSSDDLE…LLNKWLEETD (75 aa)) folds into the POU-specific domain. Positions 339–398 (KRKKRTSIEVGVKGALESHFLKCPKPSAHEITGLADSLQLEKEVVRVWFCNRRQKEKRMT) form a DNA-binding region, homeobox. The segment covering 427–436 (PSAPPPPPPA) has biased composition (pro residues).

The protein belongs to the POU transcription factor family. Class-3 subfamily. As to expression, expressed in embryonal stem cells and in the developing brain.

The protein localises to the nucleus. Transcription factor that binds to the octamer motif (5'-ATTTGCAT-3'). Acts as a transcriptional activator when binding cooperatively with SOX4, SOX11, or SOX12 to gene promoters. Acts as a transcriptional repressor of myelin-specific genes. This Homo sapiens (Human) protein is POU domain, class 3, transcription factor 1 (POU3F1).